We begin with the raw amino-acid sequence, 499 residues long: Glycerol kinase (499 aa).

Threonine 13 is a binding site for ADP. Positions 13, 14, and 15 each coordinate ATP. Residue threonine 13 coordinates sn-glycerol 3-phosphate. Arginine 17 is a binding site for ADP. The sn-glycerol 3-phosphate site is built by arginine 83, glutamate 84, tyrosine 135, and aspartate 245. Glycerol-binding residues include arginine 83, glutamate 84, tyrosine 135, aspartate 245, and glutamine 246. Residues threonine 267 and glycine 310 each contribute to the ADP site. Residues threonine 267, glycine 310, glutamine 314, and glycine 411 each contribute to the ATP site. ADP-binding residues include glycine 411 and asparagine 415.

The protein belongs to the FGGY kinase family.

It catalyses the reaction glycerol + ATP = sn-glycerol 3-phosphate + ADP + H(+). It participates in polyol metabolism; glycerol degradation via glycerol kinase pathway; sn-glycerol 3-phosphate from glycerol: step 1/1. Its activity is regulated as follows. Inhibited by fructose 1,6-bisphosphate (FBP). Key enzyme in the regulation of glycerol uptake and metabolism. Catalyzes the phosphorylation of glycerol to yield sn-glycerol 3-phosphate. This chain is Glycerol kinase, found in Xanthomonas campestris pv. campestris (strain ATCC 33913 / DSM 3586 / NCPPB 528 / LMG 568 / P 25).